The primary structure comprises 530 residues: ATP synthase subunit alpha (530 aa).

169–176 contributes to the ATP binding site; that stretch reads GDRQTGKT.

The protein belongs to the ATPase alpha/beta chains family. As to quaternary structure, F-type ATPases have 2 components, CF(1) - the catalytic core - and CF(0) - the membrane proton channel. CF(1) has five subunits: alpha(3), beta(3), gamma(1), delta(1), epsilon(1). CF(0) has three main subunits: a(1), b(2) and c(9-12). The alpha and beta chains form an alternating ring which encloses part of the gamma chain. CF(1) is attached to CF(0) by a central stalk formed by the gamma and epsilon chains, while a peripheral stalk is formed by the delta and b chains.

The protein localises to the cell membrane. The enzyme catalyses ATP + H2O + 4 H(+)(in) = ADP + phosphate + 5 H(+)(out). Produces ATP from ADP in the presence of a proton gradient across the membrane. The alpha chain is a regulatory subunit. This is ATP synthase subunit alpha from Mycoplasmopsis synoviae (strain 53) (Mycoplasma synoviae).